Here is a 572-residue protein sequence, read N- to C-terminus: Phosphoenolpyruvate-protein phosphotransferase (572 aa).

The Tele-phosphohistidine intermediate role is filled by histidine 190. Residues arginine 297 and arginine 333 each contribute to the phosphoenolpyruvate site. Mg(2+) contacts are provided by glutamate 427 and aspartate 451. Phosphoenolpyruvate-binding positions include 450 to 451 and arginine 461; that span reads ND. Cysteine 498 acts as the Proton donor in catalysis.

Belongs to the PEP-utilizing enzyme family. In terms of assembly, homodimer. It depends on Mg(2+) as a cofactor.

The protein resides in the cytoplasm. It carries out the reaction L-histidyl-[protein] + phosphoenolpyruvate = N(pros)-phospho-L-histidyl-[protein] + pyruvate. General (non sugar-specific) component of the phosphoenolpyruvate-dependent sugar phosphotransferase system (sugar PTS). This major carbohydrate active-transport system catalyzes the phosphorylation of incoming sugar substrates concomitantly with their translocation across the cell membrane. Enzyme I transfers the phosphoryl group from phosphoenolpyruvate (PEP) to the phosphoryl carrier protein (HPr). This chain is Phosphoenolpyruvate-protein phosphotransferase (ptsI), found in Mycoplasma genitalium (strain ATCC 33530 / DSM 19775 / NCTC 10195 / G37) (Mycoplasmoides genitalium).